A 129-amino-acid polypeptide reads, in one-letter code: Large ribosomal subunit protein bL20 (129 aa).

It belongs to the bacterial ribosomal protein bL20 family.

Binds directly to 23S ribosomal RNA and is necessary for the in vitro assembly process of the 50S ribosomal subunit. It is not involved in the protein synthesizing functions of that subunit. This chain is Large ribosomal subunit protein bL20, found in Mycobacterium leprae (strain Br4923).